The sequence spans 347 residues: Beta carbonic anhydrase 1, chloroplastic (347 aa).

Residues 1–113 (MSTAPLSGFF…AAAKVEQITA (113 aa)) constitute a chloroplast transit peptide. N-acetylalanine is present on Ala114. The residue at position 175 (Ser175) is a Phosphoserine. Tyr203 is modified (phosphotyrosine). Ser266 bears the Phosphoserine mark. Cys280 is subject to S-nitrosocysteine.

This sequence belongs to the beta-class carbonic anhydrase family. As to quaternary structure, homohexamer. S-nitrosylation at Cys-280 is up-regulated during nitrosative burst and suppresses both binding of salicylic acid and carbonic anhydrase activity. S-nitrosylated in response to an avirulent but not to a virulent bacterial strain. Strongly expressed in aerial tissues including leaves, stems, flowers and siliques. Accumulates in both guard cells and mesophyll cells.

Its subcellular location is the plastid. The protein localises to the chloroplast stroma. The protein resides in the cell membrane. The catalysed reaction is hydrogencarbonate + H(+) = CO2 + H2O. Its function is as follows. Reversible hydration of carbon dioxide. Required for photosynthesis in cotyledons. Binds salicylic acid. Together with BCA4, involved in the CO(2) signaling pathway which controls gas-exchange between plants and the atmosphere by modulating stomatal development and movements. Promotes water use efficiency. This chain is Beta carbonic anhydrase 1, chloroplastic, found in Arabidopsis thaliana (Mouse-ear cress).